Consider the following 271-residue polypeptide: Type III pantothenate kinase (271 aa).

5-12 (DISNSVTK) contributes to the ATP binding site. Residues Tyr85 and 92–95 (GADR) contribute to the substrate site. The active-site Proton acceptor is the Asp94. A K(+)-binding site is contributed by Asp114. ATP is bound at residue Thr117. Position 169 (Thr169) interacts with substrate.

Belongs to the type III pantothenate kinase family. In terms of assembly, homodimer. Requires NH4(+) as cofactor. K(+) serves as cofactor.

Its subcellular location is the cytoplasm. The catalysed reaction is (R)-pantothenate + ATP = (R)-4'-phosphopantothenate + ADP + H(+). Its pathway is cofactor biosynthesis; coenzyme A biosynthesis; CoA from (R)-pantothenate: step 1/5. Catalyzes the phosphorylation of pantothenate (Pan), the first step in CoA biosynthesis. This Methylacidiphilum infernorum (isolate V4) (Methylokorus infernorum (strain V4)) protein is Type III pantothenate kinase.